The chain runs to 683 residues: Phenoloxidase 3 (683 aa).

A propeptide spanning residues 1-48 is cleaved from the precursor; it reads MADKKNLLLLFDHPTEPVFMDKGGNGTVFDVPASYVTDRYNKMCKKVQ. Asparagine 25 carries an N-linked (GlcNAc...) asparagine glycan. Positions 209, 213, and 239 each coordinate Cu cation. Glutamate 351 acts as the Proton acceptor in catalysis. N-linked (GlcNAc...) asparagine glycosylation occurs at asparagine 358. Histidine 366, histidine 370, and histidine 406 together coordinate Cu cation. Residues asparagine 492 and asparagine 514 are each glycosylated (N-linked (GlcNAc...) asparagine). 2 disulfide bridges follow: cysteine 574–cysteine 617 and cysteine 576–cysteine 624.

Belongs to the tyrosinase family. It depends on Cu(2+) as a cofactor. Post-translationally, upon activation, a trypsin type protease cleaves prophenol oxidase to yield the active enzyme.

It is found in the secreted. The enzyme catalyses 2 L-dopa + O2 = 2 L-dopaquinone + 2 H2O. It carries out the reaction L-tyrosine + O2 = L-dopaquinone + H2O. In terms of biological role, this is a copper-containing oxidase that functions in the formation of pigments such as melanins and other polyphenolic compounds. Catalyzes the rate-limiting conversions of tyrosine to DOPA, DOPA to DOPA-quinone and possibly 5,6 dihydroxyindole to indole-5'6 quinone. This chain is Phenoloxidase 3 (PPO3), found in Drosophila erecta (Fruit fly).